The primary structure comprises 161 residues: Interleukin-17F (161 aa).

A signal peptide spans 1–28 (MKCTRETAMVKSLLLLMLGLAILREVAA). N-linked (GlcNAc...) asparagine glycosylation occurs at asparagine 83. 2 cysteine pairs are disulfide-bonded: cysteine 100–cysteine 150 and cysteine 105–cysteine 152.

Belongs to the IL-17 family. As to quaternary structure, homodimer; disulfide-linked. Heterodimer with IL17A (IL17A-IL17F). Forms complexes with IL17RA and IL17RC receptors with 2:1 binding stoichiometry: two receptor chains for one interleukin molecule. IL17F homodimer forms predominantly complexes with IL17RC homodimer, whereas IL17A-IL17F favors complexes with IL17RA-IL17RC. IL17RA and IL17RC chains cannot distinguish between IL17A and IL17F molecules, potentially enabling the formation of topologically distinct complexes. In terms of tissue distribution, expressed by T-helper 17 cells (Th17) (at protein level). The expression pattern reflects the differentiation state. In fully differentiated Th17 cells, IL17A-IL17F heterodimers are produced at higher levels than IL17A-IL17A and IL17F-IL17F dimers. Dominantly secreted in intestine. Expressed by resident cells of the lamina propria, both epithelial cells and immune cell subsets including natural killer cells, dendritic cells, macrophages and various T and B cell subsets. Expressed by epithelial cells and innate immune cells in the colon. Expressed in group 3 innate lymphoid cells.

It is found in the secreted. In terms of biological role, effector cytokine of innate and adaptive immune system involved in antimicrobial host defense and maintenance of tissue integrity. IL17A-IL17F signals via IL17RA-IL17RC heterodimeric receptor complex, triggering homotypic interaction of IL17RA and IL17RC chains with TRAF3IP2 adapter through SEFIR domains. This leads to downstream TRAF6-mediated activation of NF-kappa-B and MAPkinase pathways ultimately resulting in transcriptional activation of cytokines, chemokines, antimicrobial peptides and matrix metalloproteinases, with potential strong immune inflammation. IL17A-IL17F is primarily involved in host defense against extracellular bacteria and fungi by inducing neutrophilic inflammation. As signature effector cytokine of T-helper 17 cells (Th17), primarily induces neutrophil activation and recruitment at infection and inflammatory sites. Stimulates the production of antimicrobial beta-defensins DEFB1, DEFB103A, and DEFB104A by mucosal epithelial cells, limiting the entry of microbes through the epithelial barriers. IL17F homodimer can signal via IL17RC homodimeric receptor complex, triggering downstream activation of TRAF6 and NF-kappa-B signaling pathway. Via IL17RC induces transcriptional activation of IL33, a potent cytokine that stimulates group 2 innate lymphoid cells and adaptive T-helper 2 cells involved in pulmonary allergic response to fungi. Likely via IL17RC, promotes sympathetic innervation of peripheral organs by coordinating the communication between gamma-delta T cells and parenchymal cells. Stimulates sympathetic innervation of thermogenic adipose tissue by driving TGFB1 expression. Regulates the composition of intestinal microbiota and immune tolerance by inducing antimicrobial proteins that specifically control the growth of commensal Firmicutes and Bacteroidetes. The chain is Interleukin-17F (Il17f) from Mus musculus (Mouse).